The following is a 408-amino-acid chain: PCI domain-containing protein 2 (408 aa).

The residue at position 2 (Ala2) is an N-acetylalanine. At Ser45 the chain carries Phosphoserine. The PCI domain occupies 210-400 (VTYRYYVGRK…QKLVVSKQNP (191 aa)).

The protein belongs to the CSN12 family. As to quaternary structure, component of the nuclear pore complex (NPC)-associated TREX-2 complex (transcription and export complex 2), composed of at least GANP, 2 copies of ENY2, PCID2, SEM1/DSS1, and either centrin CETN2 or centrin CETN3. The TREX-2 complex also associates with ALYREF/ALY and with the nucleoporin NUP153. Interacts with BRCA2. Interacts with SRCAP chromatin remodeling complex component ZNHIT1; the interaction results in inhibition of SRCAP complex activity, preventing the deposition of histone variant H2AZ1/H2A.Z to lymphoid fate regulator genes and restricting lymphoid lineage commitment.

It is found in the cytoplasm. It localises to the nucleus. The protein resides in the nuclear pore complex. Functionally, required for B-cell survival through the regulation of the expression of cell-cycle checkpoint MAD2L1 protein during B cell differentiation. As a component of the TREX-2 complex, involved in the export of mRNAs to the cytoplasm through the nuclear pores. Binds and stabilizes BRCA2 and is thus involved in the control of R-loop-associated DNA damage and transcription-associated genomic instability. Blocks the activity of the SRCAP chromatin remodeling complex by interacting with SRCAP complex member ZNHIT1 and inhibiting its interaction with the complex. This prevents the deposition of histone variant H2AZ1/H2A.Z at the nucleosomes of key lymphoid fate regulator genes which suppresses their expression and restricts lymphoid lineage commitment. The protein is PCI domain-containing protein 2 (PCID2) of Bos taurus (Bovine).